A 311-amino-acid polypeptide reads, in one-letter code: tRNA-cytidine(32) 2-sulfurtransferase (311 aa).

A PP-loop motif motif is present at residues Ser-47–Ser-52. The [4Fe-4S] cluster site is built by Cys-122, Cys-125, and Cys-213.

Belongs to the TtcA family. In terms of assembly, homodimer. It depends on Mg(2+) as a cofactor. [4Fe-4S] cluster is required as a cofactor.

Its subcellular location is the cytoplasm. It carries out the reaction cytidine(32) in tRNA + S-sulfanyl-L-cysteinyl-[cysteine desulfurase] + AH2 + ATP = 2-thiocytidine(32) in tRNA + L-cysteinyl-[cysteine desulfurase] + A + AMP + diphosphate + H(+). The protein operates within tRNA modification. Catalyzes the ATP-dependent 2-thiolation of cytidine in position 32 of tRNA, to form 2-thiocytidine (s(2)C32). The sulfur atoms are provided by the cysteine/cysteine desulfurase (IscS) system. This Salmonella dublin (strain CT_02021853) protein is tRNA-cytidine(32) 2-sulfurtransferase.